A 466-amino-acid polypeptide reads, in one-letter code: Serine/threonine-protein kinase SSN3 (466 aa).

Residues 32 to 396 (YKILGFISSG…ARDALRHPWF (365 aa)) form the Protein kinase domain. 38–46 (ISSGTYGRV) lines the ATP pocket. The tract at residues 58-105 (ASAKSALPSSTRAALSLPKDKLPSPSFTEDSDPLNNPEMCMRPGDRPA) is disordered. Lys114 serves as a coordination point for ATP. Asp216 serves as the catalytic Proton acceptor. Residues 421–466 (THEDNGDAKMGSLPQSMAGGRLPSSSNFRPASGNIVQPAARKKARI) form a disordered region.

This sequence belongs to the protein kinase superfamily. CMGC Ser/Thr protein kinase family. CDC2/CDKX subfamily. In terms of assembly, component of the SRB8-11 complex, a regulatory module of the Mediator complex. Mg(2+) is required as a cofactor.

It is found in the nucleus. The enzyme catalyses L-seryl-[protein] + ATP = O-phospho-L-seryl-[protein] + ADP + H(+). It carries out the reaction L-threonyl-[protein] + ATP = O-phospho-L-threonyl-[protein] + ADP + H(+). It catalyses the reaction [DNA-directed RNA polymerase] + ATP = phospho-[DNA-directed RNA polymerase] + ADP + H(+). Functionally, component of the SRB8-11 complex. The SRB8-11 complex is a regulatory module of the Mediator complex which is itself involved in regulation of basal and activated RNA polymerase II-dependent transcription. The SRB8-11 complex may be involved in the transcriptional repression of a subset of genes regulated by Mediator. It may inhibit the association of the Mediator complex with RNA polymerase II to form the holoenzyme complex. The SRB8-11 complex phosphorylates the C-terminal domain (CTD) of the largest subunit of RNA polymerase II. This Cryptococcus neoformans var. neoformans serotype D (strain B-3501A) (Filobasidiella neoformans) protein is Serine/threonine-protein kinase SSN3 (SSN3).